Reading from the N-terminus, the 361-residue chain is Phospho-N-acetylmuramoyl-pentapeptide-transferase (361 aa).

The next 10 helical transmembrane spans lie at 28-48, 74-94, 99-119, 133-153, 168-188, 203-223, 236-256, 263-283, 288-308, and 338-358; these read LAIIITLSLSFITGPILIEFL, TMGGIMIILSSCLSTLLLADL, IWITLFGFISFGIIGFMDDYA, SKLLLQGIISVIICVLLEYLD, LSLDLGYCYIVFAIFVIVGSS, VPIAFTAGSFALISYLVGNLI, TGELTVLCAGLVGSCLGFLWF, VFMGDTGSLSLGGVLGIISVI, IVLAIVGGLFVIETASVILQV, and KVVIRFWIISVIFALIGLSSL.

Belongs to the glycosyltransferase 4 family. MraY subfamily. It depends on Mg(2+) as a cofactor.

Its subcellular location is the cell membrane. The catalysed reaction is UDP-N-acetyl-alpha-D-muramoyl-L-alanyl-gamma-D-glutamyl-meso-2,6-diaminopimeloyl-D-alanyl-D-alanine + di-trans,octa-cis-undecaprenyl phosphate = di-trans,octa-cis-undecaprenyl diphospho-N-acetyl-alpha-D-muramoyl-L-alanyl-D-glutamyl-meso-2,6-diaminopimeloyl-D-alanyl-D-alanine + UMP. It functions in the pathway cell wall biogenesis; peptidoglycan biosynthesis. In terms of biological role, catalyzes the initial step of the lipid cycle reactions in the biosynthesis of the cell wall peptidoglycan: transfers peptidoglycan precursor phospho-MurNAc-pentapeptide from UDP-MurNAc-pentapeptide onto the lipid carrier undecaprenyl phosphate, yielding undecaprenyl-pyrophosphoryl-MurNAc-pentapeptide, known as lipid I. The polypeptide is Phospho-N-acetylmuramoyl-pentapeptide-transferase (Rickettsia rickettsii).